Reading from the N-terminus, the 228-residue chain is FAS1 domain-containing protein NCU02579 (228 aa).

Residues 1 to 18 (MRFTPYLVLAPTAAVAFA) form the signal peptide. Residues 50-74 (PAVGLGPAMPPSGAPQADGPANAGG) form a disordered region. The region spanning 77–225 (SVMLSDVMGR…GEVWILKGVR (149 aa)) is the FAS1 domain.

Its subcellular location is the vacuole. This is FAS1 domain-containing protein NCU02579 from Neurospora crassa (strain ATCC 24698 / 74-OR23-1A / CBS 708.71 / DSM 1257 / FGSC 987).